Consider the following 614-residue polypeptide: 1-deoxy-D-xylulose-5-phosphate synthase (614 aa).

Thiamine diphosphate contacts are provided by residues His74 and 115–117 (AHS). Asp146 is a Mg(2+) binding site. Thiamine diphosphate contacts are provided by residues 147 to 148 (GA), Asn175, Tyr282, and Glu363. Asn175 lines the Mg(2+) pocket.

The protein belongs to the transketolase family. DXPS subfamily. Homodimer. It depends on Mg(2+) as a cofactor. The cofactor is thiamine diphosphate.

It catalyses the reaction D-glyceraldehyde 3-phosphate + pyruvate + H(+) = 1-deoxy-D-xylulose 5-phosphate + CO2. It functions in the pathway metabolic intermediate biosynthesis; 1-deoxy-D-xylulose 5-phosphate biosynthesis; 1-deoxy-D-xylulose 5-phosphate from D-glyceraldehyde 3-phosphate and pyruvate: step 1/1. Functionally, catalyzes the acyloin condensation reaction between C atoms 2 and 3 of pyruvate and glyceraldehyde 3-phosphate to yield 1-deoxy-D-xylulose-5-phosphate (DXP). The chain is 1-deoxy-D-xylulose-5-phosphate synthase from Nitrosospira multiformis (strain ATCC 25196 / NCIMB 11849 / C 71).